The primary structure comprises 438 residues: MGRVEDGGTTEELEDWDPGTSALPAPGIKQGPREQTGTGPLSQKCWEPEPDAPSQPGPALWSRGRARTQALAGGSSLQQLDPENTGFIGADTFTGLVHSHELPLDPAKLDMLVALAQSNEQGQVCYQELVDLISSKRSSSFKRAIANGQRALPRDGPLDEPGLGVYKRFVRYVAYEILPCEVDRRWYFYRHRSCPPPVFMASVTLAQIIVFLCYGARLNKWVLQTYHPEYMKSPLVYHPGHRARAWRFLTYMFMHVGLEQLGFNALLQLMIGVPLEMVHGLLRISLLYLAGVLAGSLTVSITDMRAPVVGGSGGVYALCSAHLANVVMNWAGMRCPYKLLRMVLALVCMSSEVGRAVWLRFSPPLPASGPQPSFMAHLAGAVVGVSMGLTILRSYEERLRDQCGWWVVLLAYGTFLLFAVFWNVFAYDLLGAHIPPPP.

Positions 1-62 are disordered; that stretch reads MGRVEDGGTT…PSQPGPALWS (62 aa). Positions 8-17 are enriched in acidic residues; the sequence is GTTEELEDWD. 7 helical membrane passes run 196-216, 262-282, 284-304, 308-328, 340-359, 372-392, and 405-425; these read PPVFMASVTLAQIIVFLCYGA, GFNALLQLMIGVPLEMVHGLL, ISLLYLAGVLAGSLTVSITDM, VVGGSGGVYALCSAHLANVVM, LRMVLALVCMSSEVGRAVWL, PSFMAHLAGAVVGVSMGLTIL, and WWVVLLAYGTFLLFAVFWNVF. Ser312 acts as the Nucleophile in catalysis. His377 is a catalytic residue.

The protein belongs to the peptidase S54 family. In terms of tissue distribution, detected in heart, brain, skeletal muscle and kidney.

Its subcellular location is the membrane. It catalyses the reaction Cleaves type-1 transmembrane domains using a catalytic dyad composed of serine and histidine that are contributed by different transmembrane domains.. May be involved in regulated intramembrane proteolysis and the subsequent release of functional polypeptides from their membrane anchors. The chain is Rhomboid-related protein 1 (RHBDL1) from Homo sapiens (Human).